We begin with the raw amino-acid sequence, 264 residues long: Thymidylate synthase (264 aa).

R21 lines the dUMP pocket. Residue H51 coordinates (6R)-5,10-methylene-5,6,7,8-tetrahydrofolate. A dUMP-binding site is contributed by 126–127 (RR). Residue C146 is the Nucleophile of the active site. Residues 166 to 169 (RSCD), N177, and 207 to 209 (HLY) contribute to the dUMP site. Residue D169 participates in (6R)-5,10-methylene-5,6,7,8-tetrahydrofolate binding. (6R)-5,10-methylene-5,6,7,8-tetrahydrofolate is bound at residue A263.

The protein belongs to the thymidylate synthase family. Bacterial-type ThyA subfamily. In terms of assembly, homodimer.

It localises to the cytoplasm. It carries out the reaction dUMP + (6R)-5,10-methylene-5,6,7,8-tetrahydrofolate = 7,8-dihydrofolate + dTMP. It functions in the pathway pyrimidine metabolism; dTTP biosynthesis. Its function is as follows. Catalyzes the reductive methylation of 2'-deoxyuridine-5'-monophosphate (dUMP) to 2'-deoxythymidine-5'-monophosphate (dTMP) while utilizing 5,10-methylenetetrahydrofolate (mTHF) as the methyl donor and reductant in the reaction, yielding dihydrofolate (DHF) as a by-product. This enzymatic reaction provides an intracellular de novo source of dTMP, an essential precursor for DNA biosynthesis. The protein is Thymidylate synthase of Xenorhabdus nematophila (strain ATCC 19061 / DSM 3370 / CCUG 14189 / LMG 1036 / NCIMB 9965 / AN6).